The sequence spans 502 residues: Glycerol kinase (502 aa).

Residue Thr15 participates in ADP binding. Residues Thr15, Thr16, and Ser17 each coordinate ATP. Position 15 (Thr15) interacts with sn-glycerol 3-phosphate. Arg19 provides a ligand contact to ADP. Sn-glycerol 3-phosphate contacts are provided by Arg85, Glu86, and Tyr137. Glycerol-binding residues include Arg85, Glu86, and Tyr137. Position 233 is a phosphohistidine; by HPr (His233). Asp247 provides a ligand contact to sn-glycerol 3-phosphate. Residues Asp247 and Gln248 each contribute to the glycerol site. Thr269 and Gly312 together coordinate ADP. Residues Thr269, Gly312, Gln316, and Gly413 each coordinate ATP. ADP-binding residues include Gly413 and Asn417.

This sequence belongs to the FGGY kinase family. Homotetramer and homodimer (in equilibrium). Post-translationally, the phosphoenolpyruvate-dependent sugar phosphotransferase system (PTS), including enzyme I, and histidine-containing protein (HPr) are required for the phosphorylation, which leads to the activation of the enzyme.

The catalysed reaction is glycerol + ATP = sn-glycerol 3-phosphate + ADP + H(+). The protein operates within polyol metabolism; glycerol degradation via glycerol kinase pathway; sn-glycerol 3-phosphate from glycerol: step 1/1. Its activity is regulated as follows. Activated by phosphorylation and inhibited by fructose 1,6-bisphosphate (FBP). Key enzyme in the regulation of glycerol uptake and metabolism. Catalyzes the phosphorylation of glycerol to yield sn-glycerol 3-phosphate. The polypeptide is Glycerol kinase (Streptococcus agalactiae serotype Ia (strain ATCC 27591 / A909 / CDC SS700)).